A 116-amino-acid polypeptide reads, in one-letter code: Ribonuclease P protein component (116 aa).

Belongs to the RnpA family. Consists of a catalytic RNA component (M1 or rnpB) and a protein subunit.

It carries out the reaction Endonucleolytic cleavage of RNA, removing 5'-extranucleotides from tRNA precursor.. In terms of biological role, RNaseP catalyzes the removal of the 5'-leader sequence from pre-tRNA to produce the mature 5'-terminus. It can also cleave other RNA substrates such as 4.5S RNA. The protein component plays an auxiliary but essential role in vivo by binding to the 5'-leader sequence and broadening the substrate specificity of the ribozyme. The protein is Ribonuclease P protein component of Carboxydothermus hydrogenoformans (strain ATCC BAA-161 / DSM 6008 / Z-2901).